The sequence spans 890 residues: Potassium/sodium hyperpolarization-activated cyclic nucleotide-gated channel 1 (890 aa).

The segment at 1-93 (MEGGGKPNSS…AEGPRRQYGF (93 aa)) is disordered. Over 1–142 (MEGGGKPNSS…WIIHPYSDFR (142 aa)) the chain is Cytoplasmic. Residues 8–34 (NSSSNSRDDGNSVFPAKASATGAGPAA) are compositionally biased toward low complexity. Residues 62–77 (DGGGGGGGGGGGGEEP) are compositionally biased toward gly residues. Residues 143 to 164 (FYWDLIMLIMMVGNLVIIPVGI) form a helical membrane-spanning segment. Residues 165 to 173 (TFFTEQTTT) are Extracellular-facing. A helical transmembrane segment spans residues 174–194 (PWIIFNVASDTVFLLDLIMNF). At 195 to 215 (RTGTVNEDSSEIILDPKVIKM) the chain is on the cytoplasmic side. A helical membrane pass occupies residues 216 to 236 (NYLKSWFVVDFISSIPVDYIF). Topologically, residues 237–260 (LIVEKGMDSEVYKTARALRIVRFT) are extracellular. A helical; Voltage-sensor transmembrane segment spans residues 261–281 (KILSLLRLLRLSRLIRYIHQW). Over 282–295 (EEIFHMTYDLASAV) the chain is Cytoplasmic. The helical transmembrane segment at 296–318 (VRIFNLIGMMLLLCHWDGCLQFL) threads the bilayer. The Extracellular portion of the chain corresponds to 319 to 344 (VPLLQDFPPDCWVSLNEMVNDSWGKQ). An N-linked (GlcNAc...) asparagine glycan is attached at N338. The pore-forming intramembrane region spans 345-366 (YSYALFKAMSHMLCIGYGAQAP). Residues 358 to 362 (CIGYG) carry the Selectivity filter motif. Residues 367-371 (VSMSD) are Extracellular-facing. Residues 372–392 (LWITMLSMIVGATCYAMFVGH) form a helical membrane-spanning segment. Residues 393-890 (ATALIQSLDS…AEKPRFASNL (498 aa)) are Cytoplasmic-facing. Residues G539, E540, C542, R549, T550, R590, and R593 each contribute to the 3',5'-cyclic AMP site. 2 stretches are compositionally biased toward low complexity: residues 644 to 691 (MTTL…PQPS) and 731 to 749 (QQQP…TQPQ). Disordered stretches follow at residues 644–692 (MTTL…QPSA), 725–796 (SQLS…LPHE), and 845–890 (MSSG…ASNL). The span at 770–780 (STQALHNTNLT) shows a compositional bias: polar residues. Over residues 854–865 (RGVPPAPPPPAA) the composition is skewed to pro residues. Positions 880-890 (DAEKPRFASNL) are enriched in basic and acidic residues.

This sequence belongs to the potassium channel HCN family. As to quaternary structure, homotetramer. Heterotetramer with HCN2. The potassium channel is composed of a homo- or heterotetrameric complex of pore-forming subunits. Interacts with KCNE2. Interacts with the SH3 domain of CSK. In terms of tissue distribution, detected in brain, in particular in amygdala and hippocampus, while expression in caudate nucleus, corpus callosum, substantia nigra, subthalamic nucleus and thalamus is very low or not detectable. Detected at very low levels in muscle and pancreas.

It is found in the cell membrane. The enzyme catalyses Na(+)(in) = Na(+)(out). It catalyses the reaction K(+)(in) = K(+)(out). With respect to regulation, activated by cAMP, and at 10-100 times higher concentrations, also by cGMP. cAMP binding promotes tetramerization and formation of an active channel. Compared to other family members, cAMP has less stimulatory effect on HCN1 because part of the molecules already contain bound cAMP and form homotetramers when cAMP levels are low, this inherent tetramerization in HCN1 results in a weaker response to increased cAMP. Inhibited by Cs(1+), zatebradine, capsazepine and ZD7288. Hyperpolarization-activated ion channel that are permeable to sodium and potassium ions. Displays lower selectivity for K(+) over Na(+) ions. Contributes to the native pacemaker currents in heart (If) and in the generation of the I(h) current which controls neuron excitability. Participates in cerebellar mechanisms of motor learning. May mediate responses to sour stimuli. This is Potassium/sodium hyperpolarization-activated cyclic nucleotide-gated channel 1 (HCN1) from Homo sapiens (Human).